Consider the following 919-residue polypeptide: Glutamate receptor ionotropic, kainate 3 (919 aa).

A signal peptide spans 1–31; sequence MTAPWRRLRSLVWEYWAGLLVCAFWIPDSRG. The Extracellular portion of the chain corresponds to 32-563; that stretch reads MPHVIRIGGI…VFSFLNPLSP (532 aa). 7 N-linked (GlcNAc...) asparagine glycosylation sites follow: Asn70, Asn76, Asn278, Asn381, Asn415, Asn426, and Asn433. Cys99 and Cys350 form a disulfide bridge. Residues Pro518, Thr520, and Arg525 each coordinate L-glutamate. N-linked (GlcNAc...) asparagine glycosylation is found at Asn548 and Asn551. Residues 564 to 584 form a helical membrane-spanning segment; it reads DIWMYVLLAYLGVSCVLFVIA. The Cytoplasmic segment spans residues 585–636; sequence RFSPYEWYDAHPCNPGSEVVENNFTLLNSFWFGMGSLMQQGSELMPKALSTR. A helical membrane pass occupies residues 637–657; the sequence is IIGGIWWFFTLIIISSYTANL. Over 658-820 the chain is Extracellular; sequence AAFLTVERME…KEASALGIQK (163 aa). Positions 691, 692, and 739 each coordinate L-glutamate. N-linked (GlcNAc...) asparagine glycosylation is present at Asn752. Residues 821–841 form a helical membrane-spanning segment; the sequence is IGGIFIVLAAGLVLSVLVAVG. At 842 to 919 the chain is on the cytoplasmic side; sequence EFVYKLRKTA…CSTSLAPVFP (78 aa). Phosphoserine is present on Ser869. Lys887 participates in a covalent cross-link: Glycyl lysine isopeptide (Lys-Gly) (interchain with G-Cter in SUMO1).

Belongs to the glutamate-gated ion channel (TC 1.A.10.1) family. GRIK3 subfamily. Homotetramer, and heterotetramer with either GRIK4 or GRIK5. Can form functional heteromeric receptors with GRIK2. Interacts with PRKCABP. Interacts with NETO2.

It localises to the cell membrane. It is found in the postsynaptic cell membrane. The enzyme catalyses Ca(2+)(in) = Ca(2+)(out). Its function is as follows. Ionotropic glutamate receptor that functions as a cation-permeable ligand-gated ion channel, gated by L-glutamate and the glutamatergic agonist kainic acid. Binding of the excitatory neurotransmitter L-glutamate induces a conformation change, leading to the opening of the cation channel, and thereby converts the chemical signal to an electrical impulse. The receptor then desensitizes rapidly and enters a transient inactive state, characterized by the presence of bound agonist. In association with GRIK2, involved in presynaptic facilitation of glutamate release at hippocampal mossy fiber synapses. This chain is Glutamate receptor ionotropic, kainate 3 (GRIK3), found in Macaca fascicularis (Crab-eating macaque).